The following is a 282-amino-acid chain: MQEIFLCSISNVRSGDCKEDCAYCTQSSHHQGAIKRYKFKDEKVVLQEARALRELGALGFCLVTSGRELDDEKCEYIAKLAKAINQEELGLHLIACCGRADLEQLEFLRDAGIHSYNHNLETSQNFFPKICSTHTWEERFITCENALRAGLGLCSGGIFGLNESWEDRIEMLRALASLSPHTTPINFFIKNPVLPIDAETLSADEALECVLLAKEFLPNARLMVAGGREVVFKDNDKKEAKLFEYGINAVVLGDYLTTKGKAPKKDIEKLLSYGLTMATSCH.

Positions Met-1 to Arg-228 constitute a Radical SAM core domain. [4Fe-4S] cluster contacts are provided by Cys-17, Cys-21, and Cys-24. [2Fe-2S] cluster-binding residues include Cys-61, Cys-96, Cys-154, and Arg-221.

Belongs to the radical SAM superfamily. Biotin synthase family. Homodimer. The cofactor is [4Fe-4S] cluster. [2Fe-2S] cluster is required as a cofactor.

The catalysed reaction is (4R,5S)-dethiobiotin + (sulfur carrier)-SH + 2 reduced [2Fe-2S]-[ferredoxin] + 2 S-adenosyl-L-methionine = (sulfur carrier)-H + biotin + 2 5'-deoxyadenosine + 2 L-methionine + 2 oxidized [2Fe-2S]-[ferredoxin]. Its pathway is cofactor biosynthesis; biotin biosynthesis; biotin from 7,8-diaminononanoate: step 2/2. Functionally, catalyzes the conversion of dethiobiotin (DTB) to biotin by the insertion of a sulfur atom into dethiobiotin via a radical-based mechanism. This is Biotin synthase from Helicobacter pylori (strain HPAG1).